We begin with the raw amino-acid sequence, 79 residues long: Ixosin (79 aa).

Positions 1 to 56 (MSAHKVQIGLSSGQFRVALQVPSVRLKGLGSFHTGSIVLPSQGSLREDQISLHNQD) are cleaved as a propeptide — removed in mature form.

Has antifungal activity against C.albicans. Has antibacterial activity against the Gram-positive bacterium S.aureus and the Gram-negative bacterium E.coli. Lacks hemolytic activity against rabbit erythrocytes. The polypeptide is Ixosin (Ixodes sinensis (Hard tick)).